A 568-amino-acid polypeptide reads, in one-letter code: Envelope glycoprotein E (568 aa).

The first 20 residues, 1–20 (MMPATLAGLALAVTVATMFA), serve as a signal peptide directing secretion. At 21–422 (QRVDSTTIHH…GGGPGNSKRR (402 aa)) the chain is on the virion surface side. 3 N-linked (GlcNAc...) asparagine; by host glycosylation sites follow: Asn-88, Asn-179, and Asn-248. Residues Cys-271 and Cys-280 are joined by a disulfide bond. A helical membrane pass occupies residues 423-443 (AAVLGAAVWIALTLLILGGLG). Over 444–568 (AYVAVNKKCL…ANKTFPSQRY (125 aa)) the chain is Intravirion. Residues 465–468 (KPTL) carry the Internalization motif motif. The disordered stretch occupies residues 470 to 534 (THAHTYTSLP…SRRNSFGPTL (65 aa)). The segment at 482 to 497 (GDLSLEQDAEDEDEDE) is acidic. Positions 486-500 (LEQDAEDEDEDEEEL) are enriched in acidic residues. Residues 515–526 (KSSRSPSRRSSR) show a composition bias toward basic residues.

It belongs to the alphaherpesvirinae glycoprotein E family. Interacts with gI. In terms of processing, phosphorylated on serines within the acidic cluster. Phosphorylation determines whether endocytosed viral gE traffics to the trans-Golgi network or recycles to the cell membrane.

It localises to the virion membrane. It is found in the host cell membrane. Its subcellular location is the host cell junction. The protein resides in the host Golgi apparatus membrane. The protein localises to the host endosome membrane. In epithelial cells, the heterodimer gE/gI is required for the cell-to-cell spread of the virus, by sorting nascent virions to cell junctions. Once the virus reaches the cell junctions, virus particles can spread to adjacent cells extremely rapidly through interactions with cellular receptors that accumulate at these junctions. Implicated in basolateral spread in polarized cells. In neuronal cells, gE/gI is essential for the anterograde spread of the infection throughout the host nervous system. Together with US9, the heterodimer gE/gI is involved in the sorting and transport of viral structural components toward axon tips. This Psittacid herpesvirus 1 (isolate Amazon parrot/-/97-0001/1997) (PsHV-1) protein is Envelope glycoprotein E (US8).